The primary structure comprises 836 residues: Protein AKNAD1 (836 aa).

3 stretches are compositionally biased toward polar residues: residues 159-172 (SWPK…TDQL), 181-192 (SNKPGSATTTEE), and 227-248 (SYQG…NTFK). Disordered stretches follow at residues 159–248 (SWPK…NTFK) and 303–325 (LETT…KITE). Basic and acidic residues predominate over residues 311–323 (CVEKQHQEQKGKI). A coiled-coil region spans residues 372 to 484 (QKISQGKQMC…DVKEKMDESK (113 aa)). Disordered regions lie at residues 510-545 (SNEI…EAPN) and 575-596 (MRLS…DCAE).

This sequence belongs to the AKNA family.

The sequence is that of Protein AKNAD1 (AKNAD1) from Homo sapiens (Human).